The sequence spans 129 residues: ATP synthase epsilon chain (129 aa).

This sequence belongs to the ATPase epsilon chain family. As to quaternary structure, F-type ATPases have 2 components, CF(1) - the catalytic core - and CF(0) - the membrane proton channel. CF(1) has five subunits: alpha(3), beta(3), gamma(1), delta(1), epsilon(1). CF(0) has three main subunits: a, b and c.

Its subcellular location is the cell inner membrane. Functionally, produces ATP from ADP in the presence of a proton gradient across the membrane. The polypeptide is ATP synthase epsilon chain (Campylobacter jejuni subsp. doylei (strain ATCC BAA-1458 / RM4099 / 269.97)).